A 258-amino-acid polypeptide reads, in one-letter code: Imidazole glycerol phosphate synthase subunit HisF (258 aa).

Residues Asp-11 and Asp-130 contribute to the active site.

It belongs to the HisA/HisF family. Heterodimer of HisH and HisF.

The protein resides in the cytoplasm. The catalysed reaction is 5-[(5-phospho-1-deoxy-D-ribulos-1-ylimino)methylamino]-1-(5-phospho-beta-D-ribosyl)imidazole-4-carboxamide + L-glutamine = D-erythro-1-(imidazol-4-yl)glycerol 3-phosphate + 5-amino-1-(5-phospho-beta-D-ribosyl)imidazole-4-carboxamide + L-glutamate + H(+). It participates in amino-acid biosynthesis; L-histidine biosynthesis; L-histidine from 5-phospho-alpha-D-ribose 1-diphosphate: step 5/9. Functionally, IGPS catalyzes the conversion of PRFAR and glutamine to IGP, AICAR and glutamate. The HisF subunit catalyzes the cyclization activity that produces IGP and AICAR from PRFAR using the ammonia provided by the HisH subunit. The protein is Imidazole glycerol phosphate synthase subunit HisF of Yersinia enterocolitica serotype O:8 / biotype 1B (strain NCTC 13174 / 8081).